A 304-amino-acid chain; its full sequence is RING-H2 finger protein ATL2 (304 aa).

Residues 30–50 form a helical membrane-spanning segment; sequence IMLSAIVILFFVVILMVFLHL. The RING-type; atypical zinc finger occupies 119 to 161; it reads CAVCLSEFEESETGRVLPNCQHTFHVDCIDMWFHSHSTCPLCR. The interval 194 to 304 is disordered; it reads EPSSSSGLTD…DIERGGEESR (111 aa). A compositionally biased stretch (basic and acidic residues) spans 227 to 244; sequence VPRRTFSEFEDELTRRDS. A compositionally biased stretch (polar residues) spans 283 to 293; it reads PTLSCRIQMTE. Basic and acidic residues predominate over residues 295–304; the sequence is DIERGGEESR.

It belongs to the RING-type zinc finger family. ATL subfamily. As to expression, preferentially expressed around the apical meristem region.

The protein resides in the membrane. The catalysed reaction is S-ubiquitinyl-[E2 ubiquitin-conjugating enzyme]-L-cysteine + [acceptor protein]-L-lysine = [E2 ubiquitin-conjugating enzyme]-L-cysteine + N(6)-ubiquitinyl-[acceptor protein]-L-lysine.. It functions in the pathway protein modification; protein ubiquitination. In terms of biological role, may be involved in the early steps of the plant defense signaling pathway. In Arabidopsis thaliana (Mouse-ear cress), this protein is RING-H2 finger protein ATL2 (ATL2).